The following is a 1065-amino-acid chain: Leucine-rich repeats and immunoglobulin-like domains protein 2 (1065 aa).

The first 40 residues, 1 to 40 (MAPAPLGVPEEQLLGCRSRVLSRLLFIAQTALLLLPAAGA), serve as a signal peptide directing secretion. An LRRNT domain is found at 41–75 (GLCPAPCSCRIPLLDCSRRKLPAPSWRALSGLLPP). Residues 41 to 807 (GLCPAPCSCR…HEDDGWTTVG (767 aa)) lie on the Extracellular side of the membrane. LRR repeat units follow at residues 76–97 (DTAI…LESQ), 98–119 (TLQE…GEPT), 121–142 (NITL…ALQF), 145–166 (ALES…SFPR), 168–189 (QLKY…CFDN), 193–214 (SLLV…IFKL), 216–237 (HLQF…TFQG), 240–261 (SLRS…AFFG), 264–285 (NMEE…WLYG), 288–309 (MLQQ…AWEF), 312–333 (RLSE…AFVG), 336–357 (LLER…VFRF), 360–382 (NLQT…SEAF), 387–408 (SLTK…AFIG), and 411–432 (SLEH…AFSQ). Asn-91 is a glycosylation site (N-linked (GlcNAc...) asparagine). Residue Asn-121 is glycosylated (N-linked (GlcNAc...) asparagine). 2 N-linked (GlcNAc...) asparagine glycosylation sites follow: Asn-173 and Asn-189. Asn-274 carries an N-linked (GlcNAc...) asparagine glycan. Residues Asn-441, Asn-468, Asn-514, Asn-571, and Asn-589 are each glycosylated (N-linked (GlcNAc...) asparagine). In terms of domain architecture, LRRCT spans 443–494 (SSLLCDCHLKWLLQWLVDNNFQHSVNVSCAHPEWLAGQSILNVDLKDFVCDD). Ig-like C2-type domains are found at residues 498–597 (PQIR…AKLT), 602–691 (PSFL…ASLT), and 696–785 (PSFI…NVIS). The cysteines at positions 519 and 580 are disulfide-linked. A disulfide bridge connects residues Cys-623 and Cys-675. N-linked (GlcNAc...) asparagine glycans are attached at residues Asn-687 and Asn-728. An intrachain disulfide couples Cys-717 to Cys-766. The chain crosses the membrane as a helical span at residues 808–828 (IVIIVVVCCVVGTSLIWVIVI). Over 829-1065 (YHMRRKNEDY…RNIQDGSEGT (237 aa)) the chain is Cytoplasmic. Tyr-906 carries the phosphotyrosine modification. 2 disordered regions span residues 963–990 (SANR…QMSG) and 1003–1040 (ELGL…ASSM). Positions 974–983 (NHERISEKKL) are enriched in basic and acidic residues. Over residues 1013–1024 (QQPVHESPQLHQ) the composition is skewed to polar residues.

In terms of tissue distribution, detected in all tissues analyzed.

It is found in the cell membrane. The protein localises to the cytoplasm. The protein is Leucine-rich repeats and immunoglobulin-like domains protein 2 (LRIG2) of Homo sapiens (Human).